The primary structure comprises 83 residues: MSSGRLLLLLGLLTLWAELTPVSGLGRPKFCELPPEPGLCNARKTFFYYSLHSHACQKFIYGGCGGNANKFKTIDECHRTCVG.

An N-terminal signal peptide occupies residues 1-25 (MSSGRLLLLLGLLTLWAELTPVSGL). In terms of domain architecture, BPTI/Kunitz inhibitor spans 31–81 (CELPPEPGLCNARKTFFYYSLHSHACQKFIYGGCGGNANKFKTIDECHRTC). 3 disulfide bridges follow: C31-C81, C40-C64, and C56-C77.

Expressed by the venom gland.

The protein resides in the secreted. Serine protease inhibitor that inhibits chymotrypsin (Ki=3520 nM). The polypeptide is Kunitz-type serine protease inhibitor (Ophiophagus hannah (King cobra)).